The primary structure comprises 305 residues: rRNA 2'-O-methyltransferase fibrillarin (305 aa).

The disordered stretch occupies residues 1-70 (MAYTPGSRGG…SGGRGGAKGG (70 aa)). Gly residues predominate over residues 7-69 (SRGGRGGSRG…SSGGRGGAKG (63 aa)). 2 positions are modified to phosphoserine: Ser111 and Ser114. S-adenosyl-L-methionine is bound by residues 160–161 (TS), 179–180 (EF), 204–205 (DA), and 224–227 (DVAQ).

It belongs to the methyltransferase superfamily. Fibrillarin family. In terms of assembly, component of box C/D small nucleolar ribonucleoprotein (snoRNP) particles. In terms of processing, by homology to other fibrillarins, some or all of the N-terminal domain arginines are modified to asymmetric dimethylarginine (DMA).

It localises to the nucleus. It is found in the nucleolus. The enzyme catalyses L-glutaminyl-[histone H2A] + S-adenosyl-L-methionine = N(5)-methyl-L-glutaminyl-[histone H2A] + S-adenosyl-L-homocysteine + H(+). Functionally, S-adenosyl-L-methionine-dependent methyltransferase that has the ability to methylate both RNAs and proteins. Involved in pre-rRNA processing by catalyzing the site-specific 2'-hydroxyl methylation of ribose moieties in pre-ribosomal RNA. Site specificity is provided by a guide RNA that base pairs with the substrate. Methylation occurs at a characteristic distance from the sequence involved in base pairing with the guide RNA. Also acts as a protein methyltransferase by mediating methylation of 'Gln-105' of histone H2A (H2AQ105me), a modification that impairs binding of the FACT complex and is specifically present at 35S ribosomal DNA locus. The polypeptide is rRNA 2'-O-methyltransferase fibrillarin (fib1) (Schizosaccharomyces pombe (strain 972 / ATCC 24843) (Fission yeast)).